The following is a 380-amino-acid chain: Erythronate-4-phosphate dehydrogenase (380 aa).

Substrate-binding residues include Ser45 and Thr66. Residues 126–127 (QV), Asp146, Thr174, 205–207 (ASR), and Asp231 contribute to the NAD(+) site. The active site involves Arg207. Glu236 is a catalytic residue. His253 serves as the catalytic Proton donor. Gly256 contacts NAD(+). Residue Tyr257 participates in substrate binding.

This sequence belongs to the D-isomer specific 2-hydroxyacid dehydrogenase family. PdxB subfamily. As to quaternary structure, homodimer.

The protein resides in the cytoplasm. The enzyme catalyses 4-phospho-D-erythronate + NAD(+) = (R)-3-hydroxy-2-oxo-4-phosphooxybutanoate + NADH + H(+). It participates in cofactor biosynthesis; pyridoxine 5'-phosphate biosynthesis; pyridoxine 5'-phosphate from D-erythrose 4-phosphate: step 2/5. Its function is as follows. Catalyzes the oxidation of erythronate-4-phosphate to 3-hydroxy-2-oxo-4-phosphonooxybutanoate. This Pseudomonas savastanoi pv. phaseolicola (strain 1448A / Race 6) (Pseudomonas syringae pv. phaseolicola (strain 1448A / Race 6)) protein is Erythronate-4-phosphate dehydrogenase.